Reading from the N-terminus, the 70-residue chain is Small ribosomal subunit protein bS21 (70 aa).

It belongs to the bacterial ribosomal protein bS21 family.

This chain is Small ribosomal subunit protein bS21, found in Cupriavidus pinatubonensis (strain JMP 134 / LMG 1197) (Cupriavidus necator (strain JMP 134)).